The following is a 260-amino-acid chain: Isoprenyl transferase (260 aa).

Asp-40 is a catalytic residue. Residue Asp-40 participates in Mg(2+) binding. Substrate-binding positions include 41–44 (GNGR), Trp-45, Arg-53, His-57, and 85–87 (STE). Asn-88 (proton acceptor) is an active-site residue. Residues Trp-89, Arg-91, Arg-208, and 214 to 216 (RLS) contribute to the substrate site. Mg(2+) is bound at residue Glu-227.

The protein belongs to the UPP synthase family. In terms of assembly, homodimer. It depends on Mg(2+) as a cofactor.

In terms of biological role, catalyzes the condensation of isopentenyl diphosphate (IPP) with allylic pyrophosphates generating different type of terpenoids. This is Isoprenyl transferase from Bacillus subtilis (strain 168).